The sequence spans 213 residues: mRNA-decapping protein OPG121 (213 aa).

Residues E16 and R50 each contribute to the N(7)-methyl-GTP site. The region spanning K30–L209 is the Nudix hydrolase domain. The short motif at G111–D132 is the Nudix box element. Mg(2+)-binding residues include E117, E126, E130, D151, and E183. E126 (nucleophile) is an active-site residue. Residue D151 coordinates N(7)-methyl-GTP.

Belongs to the Nudix hydrolase family. Mg(2+) serves as cofactor. It depends on Mn(2+) as a cofactor.

It carries out the reaction a 5'-end (N(7)-methyl 5'-triphosphoguanosine)-guanosine in mRNA + H2O = a 5'-end phospho-guanosine in mRNA + N(7)-methyl-GDP + 2 H(+). In terms of biological role, decapping enzyme that remove the protective 5'-cap from both host and viral mRNAs to commit transcripts for decay by the cellular exonuclease XRN1. Accelerates viral and cellular mRNA turnover to eliminate competing host mRNAs and allow stage-specific synthesis of viral proteins. Acceleration of the turnover of cellular transcripts may even promote the shutoff of host protein synthesis. The chain is mRNA-decapping protein OPG121 (OPG121) from Homo sapiens (Human).